Reading from the N-terminus, the 227-residue chain is MARGIFITATGTDIGKTYVTALIIKRLRETNINCGYYKAALSGAERRDGKLIAGDANYVYNIANIKGDPNDAVSYIFQQAVSPHLAAKLNNVEISMERIKKDFYSIKNKYDYITVEGSGGIVCPISTGKERIMLHNIIKIFKLPAIVVADAGLGTINSTILTLQYMKEKNISVKMILLNNYNHKDIIHIENKGYLSDNLLIPVYTCNKNANNLEIPVEKLIEIYEEI.

Asp13–Tyr18 contributes to the ATP binding site. Thr17 serves as a coordination point for Mg(2+). Lys38 is a catalytic residue. Ser42 is a substrate binding site. ATP-binding positions include Asp55, Glu116–Gly119, and Asn179–Asn180. Asp55 and Glu116 together coordinate Mg(2+).

It belongs to the dethiobiotin synthetase family. In terms of assembly, homodimer. Mg(2+) serves as cofactor.

Its subcellular location is the cytoplasm. The catalysed reaction is (7R,8S)-7,8-diammoniononanoate + CO2 + ATP = (4R,5S)-dethiobiotin + ADP + phosphate + 3 H(+). Its pathway is cofactor biosynthesis; biotin biosynthesis; biotin from 7,8-diaminononanoate: step 1/2. Functionally, catalyzes a mechanistically unusual reaction, the ATP-dependent insertion of CO2 between the N7 and N8 nitrogen atoms of 7,8-diaminopelargonic acid (DAPA, also called 7,8-diammoniononanoate) to form a ureido ring. The protein is ATP-dependent dethiobiotin synthetase BioD of Clostridium botulinum (strain ATCC 19397 / Type A).